We begin with the raw amino-acid sequence, 596 residues long: Interleukin-1 receptor-associated kinase 3 (596 aa).

The Death domain maps to 41-106 (WRGLAERLSS…RAIHLITNYG (66 aa)). Ser110 carries the post-translational modification Phosphoserine; by IRAK1. In terms of domain architecture, Protein kinase spans 165–452 (FHKDFLIGEG…LESTQASLYF (288 aa)). Residues 171-179 (IGEGEIFEV), Lys192, 295-298 (SSAN), and Asp311 contribute to the ATP site. Ser467 is modified (phosphoserine). Residues 560 to 596 (NIDPSSEAPGHSCRSRPVESSCSSKFSWDEYEQYKKE) are disordered.

Belongs to the protein kinase superfamily. TKL Ser/Thr protein kinase family. Pelle subfamily. In terms of assembly, monomer. Homodimer; disulfide-linked. May interact with IRAK4 (when phosphorylated). Interacts (when phosphorylated at Ser-110) with PIN1 (via WW domain) in response to IL33-mediated (but not TLR4 ligand LPS) dendritic cell stimulation. As to expression, expressed in eosinophils, dendritic cells and/or monocytes (at protein level). Expressed predominantly in peripheral blood lymphocytes.

It localises to the cytoplasm. The protein localises to the nucleus. Putative inactive protein kinase which regulates signaling downstream of immune receptors including IL1R and Toll-like receptors. Inhibits dissociation of IRAK1 and IRAK4 from the Toll-like receptor signaling complex by either inhibiting the phosphorylation of IRAK1 and IRAK4 or stabilizing the receptor complex. Upon IL33-induced lung inflammation, positively regulates expression of IL6, CSF3, CXCL2 and CCL5 mRNAs in dendritic cells. The polypeptide is Interleukin-1 receptor-associated kinase 3 (Homo sapiens (Human)).